The following is a 319-amino-acid chain: ATP-dependent 6-phosphofructokinase (319 aa).

Position 11 (Gly11) interacts with ATP. An ADP-binding site is contributed by 21-25 (RAVVR). Residues 72 to 73 (RC) and 102 to 105 (GDGS) each bind ATP. Residue Asp103 coordinates Mg(2+). Residue 125–127 (TID) participates in substrate binding. The active-site Proton acceptor is Asp127. Arg154 serves as a coordination point for ADP. Substrate contacts are provided by residues Arg162 and 169–171 (MGR). Residues 185-187 (GAE), Arg211, and 213-215 (KKH) each bind ADP. Residues Glu222, Arg243, and 249–252 (HIQR) each bind substrate.

The protein belongs to the phosphofructokinase type A (PFKA) family. ATP-dependent PFK group I subfamily. Prokaryotic clade 'B1' sub-subfamily. As to quaternary structure, homotetramer. Mg(2+) serves as cofactor.

The protein localises to the cytoplasm. The enzyme catalyses beta-D-fructose 6-phosphate + ATP = beta-D-fructose 1,6-bisphosphate + ADP + H(+). It functions in the pathway carbohydrate degradation; glycolysis; D-glyceraldehyde 3-phosphate and glycerone phosphate from D-glucose: step 3/4. Its activity is regulated as follows. Allosterically activated by ADP and other diphosphonucleosides, and allosterically inhibited by phosphoenolpyruvate. Its function is as follows. Catalyzes the phosphorylation of D-fructose 6-phosphate to fructose 1,6-bisphosphate by ATP, the first committing step of glycolysis. This is ATP-dependent 6-phosphofructokinase from Halalkalibacterium halodurans (strain ATCC BAA-125 / DSM 18197 / FERM 7344 / JCM 9153 / C-125) (Bacillus halodurans).